A 307-amino-acid polypeptide reads, in one-letter code: Fructokinase (307 aa).

This sequence belongs to the carbohydrate kinase PfkB family.

The enzyme catalyses D-fructose + ATP = D-fructose 6-phosphate + ADP + H(+). Functionally, involved in sucrose metabolism. This chain is Fructokinase (scrK), found in Klebsiella pneumoniae.